A 122-amino-acid chain; its full sequence is Small ribosomal subunit protein uS13 (122 aa).

The tract at residues 93 to 122 (RLSLPVRGQRTKTNSRTRKGKRKTVAGKKK) is disordered. Positions 101-122 (QRTKTNSRTRKGKRKTVAGKKK) are enriched in basic residues.

This sequence belongs to the universal ribosomal protein uS13 family. Part of the 30S ribosomal subunit. Forms a loose heterodimer with protein S19. Forms two bridges to the 50S subunit in the 70S ribosome.

Functionally, located at the top of the head of the 30S subunit, it contacts several helices of the 16S rRNA. In the 70S ribosome it contacts the 23S rRNA (bridge B1a) and protein L5 of the 50S subunit (bridge B1b), connecting the 2 subunits; these bridges are implicated in subunit movement. Contacts the tRNAs in the A and P-sites. The chain is Small ribosomal subunit protein uS13 from Chlamydia abortus (strain DSM 27085 / S26/3) (Chlamydophila abortus).